The chain runs to 156 residues: Small ribosomal subunit protein uS7 (156 aa).

Belongs to the universal ribosomal protein uS7 family. As to quaternary structure, part of the 30S ribosomal subunit. Contacts proteins S9 and S11.

Functionally, one of the primary rRNA binding proteins, it binds directly to 16S rRNA where it nucleates assembly of the head domain of the 30S subunit. Is located at the subunit interface close to the decoding center, probably blocks exit of the E-site tRNA. The protein is Small ribosomal subunit protein uS7 of Chlorobaculum tepidum (strain ATCC 49652 / DSM 12025 / NBRC 103806 / TLS) (Chlorobium tepidum).